Consider the following 94-residue polypeptide: Co-chaperonin GroES (94 aa).

Belongs to the GroES chaperonin family. As to quaternary structure, heptamer of 7 subunits arranged in a ring. Interacts with the chaperonin GroEL.

The protein localises to the cytoplasm. Together with the chaperonin GroEL, plays an essential role in assisting protein folding. The GroEL-GroES system forms a nano-cage that allows encapsulation of the non-native substrate proteins and provides a physical environment optimized to promote and accelerate protein folding. GroES binds to the apical surface of the GroEL ring, thereby capping the opening of the GroEL channel. The sequence is that of Co-chaperonin GroES from Clostridium botulinum (strain Alaska E43 / Type E3).